Reading from the N-terminus, the 291-residue chain is Gamma-sarcoglycan (291 aa).

At 1 to 37 (MVREQYTTVTEGTHIERPENQHIYKIGIYGWRKRCLY) the chain is on the cytoplasmic side. Residues 38-58 (LFVLLLLAILVVNLALTIWIL) form a helical; Signal-anchor for type II membrane protein membrane-spanning segment. Residues 59-291 (KVMWFSPIGM…TCEEHSHVCL (233 aa)) are Extracellular-facing. Residue Asn110 is glycosylated (N-linked (GlcNAc...) asparagine). 2 disulfide bridges follow: Cys265–Cys290 and Cys267–Cys283.

This sequence belongs to the sarcoglycan beta/delta/gamma/zeta family. Interacts with the syntrophin SNTA1 and FLNC. Cross-link to form 2 major subcomplexes: one consisting of SGCB, SGCD and SGCG and the other consisting of SGCB and SGCD. The association between SGCB and SGCG is particularly strong while SGCA is loosely associated with the other sarcoglycans. Most strongly expressed in skeletal and heart muscle. Also detected in proliferating myoblasts.

The protein resides in the cell membrane. It is found in the sarcolemma. It localises to the cytoplasm. The protein localises to the cytoskeleton. In terms of biological role, component of the sarcoglycan complex, a subcomplex of the dystrophin-glycoprotein complex which forms a link between the F-actin cytoskeleton and the extracellular matrix. In Mus musculus (Mouse), this protein is Gamma-sarcoglycan (Sgcg).